The sequence spans 804 residues: Endoplasmin (804 aa).

An N-terminal signal peptide occupies residues 1–21 (MRALWVLGLCCVLLTFGSVRA). An SRT pseudosubstrate motif motif is present at residues 42–44 (SRT). N-linked (GlcNAc...) asparagine glycosylation is present at asparagine 62. The residue at position 64 (serine 64) is a Phosphoserine. The N-linked (GlcNAc...) asparagine glycan is linked to asparagine 107. ATP contacts are provided by asparagine 107, aspartate 149, and asparagine 162. Residue lysine 168 is modified to N6-(2-hydroxyisobutyryl)lysine. Serine 172 carries the phosphoserine modification. Phenylalanine 199 contacts ATP. Asparagine 217 is a glycosylation site (N-linked (GlcNAc...) asparagine). Positions 288–323 (TVEEPMEEEEAAKEEKEESDDEAAVEEEEEEKKPKT) are disordered. The segment covering 289–317 (VEEPMEEEEAAKEEKEESDDEAAVEEEEE) has biased composition (acidic residues). Serine 306 and serine 403 each carry phosphoserine. Lysine 404 is modified (N6-succinyllysine). N-linked (GlcNAc...) asparagine glycosylation is present at asparagine 445. At serine 447 the chain carries Phosphoserine. Lysine 479 carries the post-translational modification N6-acetyllysine. Asparagine 481 and asparagine 502 each carry an N-linked (GlcNAc...) asparagine glycan. Lysine 633 is subject to N6-succinyllysine. A disordered region spans residues 750-804 (DPDAKVEDEPEEEPEETTEDTTEDTEQDEDEEMDVGTDEEEQETAKESTAEKDEL). Acidic residues predominate over residues 757 to 791 (DEPEEEPEETTEDTTEDTEQDEDEEMDVGTDEEEQ). Threonine 786 bears the Phosphothreonine mark. The segment covering 792–804 (ETAKESTAEKDEL) has biased composition (basic and acidic residues). A Prevents secretion from ER motif is present at residues 801 to 804 (KDEL).

This sequence belongs to the heat shock protein 90 family. In terms of assembly, homodimer; disulfide-linked. Component of an EIF2 complex at least composed of CELF1/CUGBP1, CALR, CALR3, EIF2S1, EIF2S2, HSP90B1 and HSPA5. Part of a large chaperone multiprotein complex comprising DNAJB11, HSP90B1, HSPA5, HYOU, PDIA2, PDIA4, PDIA6, PPIB, SDF2L1, UGGT1 and very small amounts of ERP29, but not, or at very low levels, CALR nor CANX. Interacts with AIMP1; regulates its retention in the endoplasmic reticulum. Hyperglycosylated form interacts with OS9; promoting its degradation by the endoplasmic reticulum associated degradation (ERAD). Interacts with CNPY3. This interaction is disrupted in the presence of ATP. Interacts with TLR4 and TLR9, but not with TLR3. Interacts with MZB1 in a calcium-dependent manner. Interacts with METTL23. Interacts with IL1B; the interaction facilitates cargo translocation into the ERGIC. Interacts with EIF2AK3. Phosphorylated by CK2. Post-translationally, N-glycosylated cotranslationally at Asn-217 by STT3A-containing OST-A complex: this glycosylation is constitutive. In response to various stress, 5 additional facultative sites (Asn-62, Asn-107, Asn-445, Asn-481 and Asn-502) can be glycosylated post-translationally by STT3B-containing OST-B complex, leading to a hyperglycosylated form that is degraded by the ER-associated degradation (ERAD) pathway. In normal conditions, the OST-A complex together with CCDC134 prevent glycosylation at facultative sites during protein folding, thereby preventing hyperglycosylation. Mechanistically, nascent HSP90B1 is tethered during translation to a specialized CCDC134-containing translocon that forms a microenvironment for its folding, in which STT3A associates with the SRT pseudosubstrate motif, and prevents access to facultative glycosylation sites until folding is completed, rendering its facultative sites inaccessible to the OST-B complex.

Its subcellular location is the endoplasmic reticulum lumen. It is found in the sarcoplasmic reticulum lumen. The protein localises to the melanosome. The catalysed reaction is ATP + H2O = ADP + phosphate + H(+). ATP-dependent chaperone involved in the processing of proteins in the endoplasmic reticulum, regulating their transport. Together with MESD, acts as a modulator of the Wnt pathway by promoting the folding of LRP6, a coreceptor of the canonical Wnt pathway. When associated with CNPY3, required for proper folding of Toll-like receptors. Promotes folding and trafficking of TLR4 to the cell surface. May participate in the unfolding of cytosolic leaderless cargos (lacking the secretion signal sequence) such as the interleukin 1/IL-1 to facilitate their translocation into the ERGIC (endoplasmic reticulum-Golgi intermediate compartment) and secretion; the translocation process is mediated by the cargo receptor TMED10. The protein is Endoplasmin (HSP90B1) of Macaca fascicularis (Crab-eating macaque).